A 536-amino-acid polypeptide reads, in one-letter code: Probable cytochrome P450 318a1 (536 aa).

A compositionally biased stretch (basic and acidic residues) spans 439 to 457; it reads EEEQLSKGHNDSGSGEKRR. The tract at residues 439-460 is disordered; sequence EEEQLSKGHNDSGSGEKRRQRD. Residue cysteine 477 coordinates heme.

It belongs to the cytochrome P450 family. Heme is required as a cofactor.

The protein localises to the endoplasmic reticulum membrane. It localises to the microsome membrane. In terms of biological role, may be involved in the metabolism of insect hormones and in the breakdown of synthetic insecticides. The protein is Probable cytochrome P450 318a1 (Cyp318a1) of Drosophila melanogaster (Fruit fly).